The sequence spans 359 residues: 3-dehydroquinate synthase (359 aa).

NAD(+) contacts are provided by residues 70–75, 105–109, 129–130, Lys142, Lys151, and 169–172; these read DGEQYK, GVIGD, TT, and FYKT. 3 residues coordinate Zn(2+): Glu184, His247, and His264.

The protein belongs to the sugar phosphate cyclases superfamily. Dehydroquinate synthase family. Requires Co(2+) as cofactor. Zn(2+) is required as a cofactor. NAD(+) serves as cofactor.

Its subcellular location is the cytoplasm. The enzyme catalyses 7-phospho-2-dehydro-3-deoxy-D-arabino-heptonate = 3-dehydroquinate + phosphate. The protein operates within metabolic intermediate biosynthesis; chorismate biosynthesis; chorismate from D-erythrose 4-phosphate and phosphoenolpyruvate: step 2/7. Its function is as follows. Catalyzes the conversion of 3-deoxy-D-arabino-heptulosonate 7-phosphate (DAHP) to dehydroquinate (DHQ). In Francisella tularensis subsp. tularensis (strain WY96-3418), this protein is 3-dehydroquinate synthase.